Here is a 792-residue protein sequence, read N- to C-terminus: Starch synthase 2, chloroplastic/amyloplastic (792 aa).

The N-terminal 55 residues, 1–55 (MASVAESSFPLLCQIKTQRRINSSTLRHSRVSYHDLPSGSLSFRSRSFVLGHRCK), are a transit peptide targeting the chloroplast. The disordered stretch occupies residues 105 to 295 (IKESTPDLDD…GKDEEKPPPL (191 aa)). Positions 145–156 (GSVSPSTYGKSS) are enriched in polar residues. Residues 179-192 (SSASVISSSPVTSP) are compositionally biased toward low complexity. A compositionally biased stretch (polar residues) spans 221-233 (SVMTSPEKTSDPV). Positions 266–275 (KTEKYVEKTP) are enriched in basic and acidic residues. Residue lysine 315 coordinates ADP-alpha-D-glucose.

Belongs to the glycosyltransferase 1 family. Bacterial/plant glycogen synthase subfamily. In terms of tissue distribution, expressed in roots, leaves and flowers.

Its subcellular location is the plastid. The protein resides in the chloroplast. It is found in the amyloplast. It carries out the reaction [(1-&gt;4)-alpha-D-glucosyl](n) + ADP-alpha-D-glucose = [(1-&gt;4)-alpha-D-glucosyl](n+1) + ADP + H(+). Its pathway is glycan biosynthesis; starch biosynthesis. Its function is as follows. Involved in the synthesis of glycan chains within amylopectin in leaves. Is required to produce chains with a degree of polymerization of 12 to 25 (DP12-DP25). The polypeptide is Starch synthase 2, chloroplastic/amyloplastic (SS2) (Arabidopsis thaliana (Mouse-ear cress)).